The sequence spans 171 residues: Large ribosomal subunit protein uL10 (171 aa).

This sequence belongs to the universal ribosomal protein uL10 family. Part of the ribosomal stalk of the 50S ribosomal subunit. The N-terminus interacts with L11 and the large rRNA to form the base of the stalk. The C-terminus forms an elongated spine to which L12 dimers bind in a sequential fashion forming a multimeric L10(L12)X complex.

Forms part of the ribosomal stalk, playing a central role in the interaction of the ribosome with GTP-bound translation factors. This chain is Large ribosomal subunit protein uL10, found in Sphingopyxis alaskensis (strain DSM 13593 / LMG 18877 / RB2256) (Sphingomonas alaskensis).